A 718-amino-acid chain; its full sequence is D-(-)-3-hydroxybutyrate oligomer hydrolase (718 aa).

Serine 320 (charge relay system) is an active-site residue.

This sequence belongs to the D-(-)-3-hydroxybutyrate oligomer hydrolase family.

It localises to the cytoplasm. It catalyses the reaction (3R)-hydroxybutanoate dimer + H2O = 2 (R)-3-hydroxybutanoate + H(+). It participates in lipid metabolism; butanoate metabolism. Its activity is regulated as follows. Inhibited by diisopropylfluorophosphate (DFP). In terms of biological role, participates in the degradation of poly-3-hydroxybutyrate (PHB). It works downstream of poly(3-hydroxybutyrate) depolymerase, hydrolyzing D(-)-3-hydroxybutyrate oligomers of various length (3HB-oligomers) into 3HB-monomers. Seems to have also poly(3-hydroxybutyrate) depolymerase activity since it is able to release 3HB-monomers from artificial amorphous PHB. This is D-(-)-3-hydroxybutyrate oligomer hydrolase (phaZ2) from Cupriavidus necator (strain ATCC 17699 / DSM 428 / KCTC 22496 / NCIMB 10442 / H16 / Stanier 337) (Ralstonia eutropha).